Consider the following 1089-residue polypeptide: Ankyrin repeat and IBR domain-containing protein 1 (1089 aa).

Glycine 2 carries N-myristoyl glycine lipidation. ANK repeat units follow at residues 45–74 (QHNT…NPNK) and 144–173 (KKNT…DLFA). The segment at 281-321 (CQRSGVQMPTPPPSGYNAWDTLPSPRTPRTTRSSVTSPDEI) is disordered. Residues 303 to 318 (PSPRTPRTTRSSVTSP) are compositionally biased toward low complexity. The TRIAD supradomain stretch occupies residues 329–569 (DTSLCDICMC…GGYYRCTRYE (241 aa)). The Zn(2+) site is built by cysteine 333, cysteine 336, cysteine 351, histidine 353, cysteine 356, cysteine 359, cysteine 378, cysteine 383, cysteine 465, cysteine 468, histidine 473, cysteine 478, cysteine 519, and cysteine 522. The RING-type 1 zinc-finger motif lies at 333–383 (CDICMCSISVFEDPVDMPCGHDFCRGCWESFLNLKIQEGEAHNIFCPAYDC). The segment at 401-478 (DKRYLQFDIK…LGEAHEPCDC (78 aa)) adopts an IBR-type zinc-finger fold. The RING-type 2; atypical zinc-finger motif lies at 519–548 (CANCKSPIQKNEGCNHMQCAKCKYDFCWIC). The active site involves cysteine 532. Zn(2+) contacts are provided by cysteine 537, cysteine 540, cysteine 545, cysteine 548, histidine 555, and cysteine 565. Residues 575 to 640 (EEQSKEMTVE…RALKETEGGC (66 aa)) are a coiled coil. Serine 737 carries the post-translational modification Phosphoserine. The disordered stretch occupies residues 776–821 (RRGDVHSLLSNPPDPDEPSESTLDIPEGGSSSRRPGTSVVSSASMS). Residues 851–870 (EDDPNILLAIQLSLQESGLA) enclose the UIM domain. Phosphoserine occurs at positions 884 and 911. Disordered stretches follow at residues 889 to 912 (GTSL…ALSS), 927 to 964 (AEND…QDPN), and 1026 to 1089 (DASV…VHLV). Composition is skewed to polar residues over residues 931–941 (PFSTDTLSSHP) and 1070–1082 (DVSS…SSDW).

Belongs to the RBR family.

It carries out the reaction [E2 ubiquitin-conjugating enzyme]-S-ubiquitinyl-L-cysteine + [acceptor protein]-L-lysine = [E2 ubiquitin-conjugating enzyme]-L-cysteine + [acceptor protein]-N(6)-ubiquitinyl-L-lysine.. In terms of biological role, might act as an E3 ubiquitin-protein ligase, or as part of E3 complex, which accepts ubiquitin from specific E2 ubiquitin-conjugating enzymes and then transfers it to substrates. This Homo sapiens (Human) protein is Ankyrin repeat and IBR domain-containing protein 1 (ANKIB1).